Consider the following 218-residue polypeptide: Eukaryotic translation initiation factor 3 subunit K (218 aa).

A2 carries the N-acetylalanine modification. T28 bears the Phosphothreonine mark. One can recognise a PCI domain in the interval 42 to 204 (YDLEANLAVL…SIKPKNIVEK (163 aa)). The residue at position 217 (S217) is a Phosphoserine.

It belongs to the eIF-3 subunit K family. In terms of assembly, component of the eukaryotic translation initiation factor 3 (eIF-3) complex, which is composed of 13 subunits: EIF3A, EIF3B, EIF3C, EIF3D, EIF3E, EIF3F, EIF3G, EIF3H, EIF3I, EIF3J, EIF3K, EIF3L and EIF3M. The eIF-3 complex appears to include 3 stable modules: module A is composed of EIF3A, EIF3B, EIF3G and EIF3I; module B is composed of EIF3F, EIF3H, and EIF3M; and module C is composed of EIF3C, EIF3D, EIF3E, EIF3K and EIF3L. EIF3C of module C binds EIF3B of module A and EIF3H of module B, thereby linking the three modules. EIF3J is a labile subunit that binds to the eIF-3 complex via EIF3B. The eIF-3 complex interacts with RPS6KB1 under conditions of nutrient depletion. Mitogenic stimulation leads to binding and activation of a complex composed of MTOR and RPTOR, leading to phosphorylation and release of RPS6KB1 and binding of EIF4B to eIF-3. Identified in a HCV IRES-mediated translation complex, at least composed of EIF3C, IGF2BP1, RPS3 and HCV RNA-replicon. Interacts with ALKBH4, IFIT1 and IFIT2.

It localises to the nucleus. Its subcellular location is the cytoplasm. Component of the eukaryotic translation initiation factor 3 (eIF-3) complex, which is required for several steps in the initiation of protein synthesis. The eIF-3 complex associates with the 40S ribosome and facilitates the recruitment of eIF-1, eIF-1A, eIF-2:GTP:methionyl-tRNAi and eIF-5 to form the 43S pre-initiation complex (43S PIC). The eIF-3 complex stimulates mRNA recruitment to the 43S PIC and scanning of the mRNA for AUG recognition. The eIF-3 complex is also required for disassembly and recycling of post-termination ribosomal complexes and subsequently prevents premature joining of the 40S and 60S ribosomal subunits prior to initiation. The eIF-3 complex specifically targets and initiates translation of a subset of mRNAs involved in cell proliferation, including cell cycling, differentiation and apoptosis, and uses different modes of RNA stem-loop binding to exert either translational activation or repression. This chain is Eukaryotic translation initiation factor 3 subunit K (Eif3k), found in Mus musculus (Mouse).